A 492-amino-acid chain; its full sequence is V-type proton ATPase subunit B 1 (492 aa).

Belongs to the ATPase alpha/beta chains family. In terms of assembly, V-ATPase is a heteromultimeric enzyme composed of a peripheral catalytic V1 complex (main components: subunits A, B, C, D, E, and F) attached to an integral membrane V0 proton pore complex (main component: the proteolipid protein).

In terms of biological role, non-catalytic subunit of the peripheral V1 complex of vacuolar ATPase. V-ATPase is responsible for acidifying a variety of intracellular compartments in eukaryotic cells. The polypeptide is V-type proton ATPase subunit B 1 (Acetabularia acetabulum (Mermaid's wine glass)).